We begin with the raw amino-acid sequence, 447 residues long: N-succinylarginine dihydrolase (447 aa).

Residues 19–28 (AGLSFGNEAS), asparagine 110, and 137–138 (HR) each bind substrate. Residue glutamate 174 is part of the active site. Arginine 212 is a binding site for substrate. Residue histidine 248 is part of the active site. Substrate-binding residues include aspartate 250 and asparagine 359. Catalysis depends on cysteine 365, which acts as the Nucleophile.

It belongs to the succinylarginine dihydrolase family. As to quaternary structure, homodimer.

It carries out the reaction N(2)-succinyl-L-arginine + 2 H2O + 2 H(+) = N(2)-succinyl-L-ornithine + 2 NH4(+) + CO2. Its pathway is amino-acid degradation; L-arginine degradation via AST pathway; L-glutamate and succinate from L-arginine: step 2/5. In terms of biological role, catalyzes the hydrolysis of N(2)-succinylarginine into N(2)-succinylornithine, ammonia and CO(2). The chain is N-succinylarginine dihydrolase from Escherichia coli O6:H1 (strain CFT073 / ATCC 700928 / UPEC).